Consider the following 72-residue polypeptide: Translation initiation factor IF-1 (72 aa).

Residues 1–72 form the S1-like domain; sequence MAKSDVIEVD…DKGRITYRYK (72 aa).

The protein belongs to the IF-1 family. As to quaternary structure, component of the 30S ribosomal translation pre-initiation complex which assembles on the 30S ribosome in the order IF-2 and IF-3, IF-1 and N-formylmethionyl-tRNA(fMet); mRNA recruitment can occur at any time during PIC assembly.

The protein resides in the cytoplasm. Functionally, one of the essential components for the initiation of protein synthesis. Stabilizes the binding of IF-2 and IF-3 on the 30S subunit to which N-formylmethionyl-tRNA(fMet) subsequently binds. Helps modulate mRNA selection, yielding the 30S pre-initiation complex (PIC). Upon addition of the 50S ribosomal subunit IF-1, IF-2 and IF-3 are released leaving the mature 70S translation initiation complex. The chain is Translation initiation factor IF-1 from Sulfurimonas denitrificans (strain ATCC 33889 / DSM 1251) (Thiomicrospira denitrificans (strain ATCC 33889 / DSM 1251)).